Consider the following 234-residue polypeptide: Accessory gland protein Acp29AB (234 aa).

An N-terminal signal peptide occupies residues 1–21 (MYASNLLYLLALWNLWDLSGG). 2 N-linked (GlcNAc...) asparagine glycosylation sites follow: Asn-61 and Asn-164. Positions 137-234 (VTCRKMNGHL…SFVCQADQWA (98 aa)) constitute a C-type lectin domain. Cystine bridges form between Cys-139–Cys-228 and Cys-207–Cys-220.

As to expression, main cells of the accessory gland and in seminal fluid.

The protein localises to the secreted. Responsible for physiological and behavioral changes in mated female flies. This chain is Accessory gland protein Acp29AB (Acp29AB), found in Drosophila melanogaster (Fruit fly).